The sequence spans 184 residues: ATP synthase subunit delta (184 aa).

Belongs to the ATPase delta chain family. As to quaternary structure, F-type ATPases have 2 components, F(1) - the catalytic core - and F(0) - the membrane proton channel. F(1) has five subunits: alpha(3), beta(3), gamma(1), delta(1), epsilon(1). F(0) has three main subunits: a(1), b(2) and c(10-14). The alpha and beta chains form an alternating ring which encloses part of the gamma chain. F(1) is attached to F(0) by a central stalk formed by the gamma and epsilon chains, while a peripheral stalk is formed by the delta and b chains.

Its subcellular location is the cell membrane. Its function is as follows. F(1)F(0) ATP synthase produces ATP from ADP in the presence of a proton or sodium gradient. F-type ATPases consist of two structural domains, F(1) containing the extramembraneous catalytic core and F(0) containing the membrane proton channel, linked together by a central stalk and a peripheral stalk. During catalysis, ATP synthesis in the catalytic domain of F(1) is coupled via a rotary mechanism of the central stalk subunits to proton translocation. This protein is part of the stalk that links CF(0) to CF(1). It either transmits conformational changes from CF(0) to CF(1) or is implicated in proton conduction. This Wolbachia pipientis subsp. Culex pipiens (strain wPip) protein is ATP synthase subunit delta.